Here is a 213-residue protein sequence, read N- to C-terminus: Holliday junction branch migration complex subunit RuvA (213 aa).

The interval 1–64 is domain I; it reads MIARLVGFLV…EDSITLFGFA (64 aa). The domain II stretch occupies residues 65–143; it reads SYLERDWFRL…AIALFSSAKG (79 aa). The flexible linker stretch occupies residues 144–159; the sequence is DHLAVEDISQPAASAH. The segment at 160–213 is domain III; sequence HAGNFMADAVSALLNLGFKPAEAQRVVQLASEELGDQATLDSLVRLALRLSSKH.

The protein belongs to the RuvA family. Homotetramer. Forms an RuvA(8)-RuvB(12)-Holliday junction (HJ) complex. HJ DNA is sandwiched between 2 RuvA tetramers; dsDNA enters through RuvA and exits via RuvB. An RuvB hexamer assembles on each DNA strand where it exits the tetramer. Each RuvB hexamer is contacted by two RuvA subunits (via domain III) on 2 adjacent RuvB subunits; this complex drives branch migration. In the full resolvosome a probable DNA-RuvA(4)-RuvB(12)-RuvC(2) complex forms which resolves the HJ.

It localises to the cytoplasm. Its function is as follows. The RuvA-RuvB-RuvC complex processes Holliday junction (HJ) DNA during genetic recombination and DNA repair, while the RuvA-RuvB complex plays an important role in the rescue of blocked DNA replication forks via replication fork reversal (RFR). RuvA specifically binds to HJ cruciform DNA, conferring on it an open structure. The RuvB hexamer acts as an ATP-dependent pump, pulling dsDNA into and through the RuvAB complex. HJ branch migration allows RuvC to scan DNA until it finds its consensus sequence, where it cleaves and resolves the cruciform DNA. In Zymomonas mobilis subsp. mobilis (strain ATCC 31821 / ZM4 / CP4), this protein is Holliday junction branch migration complex subunit RuvA.